Here is a 416-residue protein sequence, read N- to C-terminus: Bifunctional protein GlmU (416 aa).

Residues 1–229 form a pyrophosphorylase region; it reads MTNYAIILAA…FNESLGVNDR (229 aa). Residues 8 to 11, K22, Q72, and 77 to 78 contribute to the UDP-N-acetyl-alpha-D-glucosamine site; these read LAAG and GT. D102 is a Mg(2+) binding site. 4 residues coordinate UDP-N-acetyl-alpha-D-glucosamine: G139, E154, N169, and N227. N227 serves as a coordination point for Mg(2+). The linker stretch occupies residues 230–250; the sequence is VALATAETVMRQRITQKHMVN. The tract at residues 251-416 is N-acetyltransferase; that stretch reads GVTFQNPETV…DSHCTFGSWR (166 aa). 2 residues coordinate UDP-N-acetyl-alpha-D-glucosamine: R332 and K350. H362 (proton acceptor) is an active-site residue. UDP-N-acetyl-alpha-D-glucosamine is bound by residues Y365 and N376. Residues A379 and 385–386 each bind acetyl-CoA; that span reads NY.

In the N-terminal section; belongs to the N-acetylglucosamine-1-phosphate uridyltransferase family. This sequence in the C-terminal section; belongs to the transferase hexapeptide repeat family. In terms of assembly, homotrimer. Requires Mg(2+) as cofactor.

The protein resides in the cytoplasm. The catalysed reaction is alpha-D-glucosamine 1-phosphate + acetyl-CoA = N-acetyl-alpha-D-glucosamine 1-phosphate + CoA + H(+). The enzyme catalyses N-acetyl-alpha-D-glucosamine 1-phosphate + UTP + H(+) = UDP-N-acetyl-alpha-D-glucosamine + diphosphate. It functions in the pathway nucleotide-sugar biosynthesis; UDP-N-acetyl-alpha-D-glucosamine biosynthesis; N-acetyl-alpha-D-glucosamine 1-phosphate from alpha-D-glucosamine 6-phosphate (route II): step 2/2. Its pathway is nucleotide-sugar biosynthesis; UDP-N-acetyl-alpha-D-glucosamine biosynthesis; UDP-N-acetyl-alpha-D-glucosamine from N-acetyl-alpha-D-glucosamine 1-phosphate: step 1/1. The protein operates within bacterial outer membrane biogenesis; LPS lipid A biosynthesis. Catalyzes the last two sequential reactions in the de novo biosynthetic pathway for UDP-N-acetylglucosamine (UDP-GlcNAc). The C-terminal domain catalyzes the transfer of acetyl group from acetyl coenzyme A to glucosamine-1-phosphate (GlcN-1-P) to produce N-acetylglucosamine-1-phosphate (GlcNAc-1-P), which is converted into UDP-GlcNAc by the transfer of uridine 5-monophosphate (from uridine 5-triphosphate), a reaction catalyzed by the N-terminal domain. In Streptococcus pyogenes serotype M12 (strain MGAS2096), this protein is Bifunctional protein GlmU.